Here is a 160-residue protein sequence, read N- to C-terminus: NADH-quinone oxidoreductase subunit B (160 aa).

Cysteine 37, cysteine 38, cysteine 102, and cysteine 132 together coordinate [4Fe-4S] cluster.

This sequence belongs to the complex I 20 kDa subunit family. As to quaternary structure, NDH-1 is composed of 14 different subunits. Subunits NuoB, C, D, E, F, and G constitute the peripheral sector of the complex. [4Fe-4S] cluster is required as a cofactor.

Its subcellular location is the cell inner membrane. The enzyme catalyses a quinone + NADH + 5 H(+)(in) = a quinol + NAD(+) + 4 H(+)(out). Its function is as follows. NDH-1 shuttles electrons from NADH, via FMN and iron-sulfur (Fe-S) centers, to quinones in the respiratory chain. Couples the redox reaction to proton translocation (for every two electrons transferred, four hydrogen ions are translocated across the cytoplasmic membrane), and thus conserves the redox energy in a proton gradient. The chain is NADH-quinone oxidoreductase subunit B from Cupriavidus pinatubonensis (strain JMP 134 / LMG 1197) (Cupriavidus necator (strain JMP 134)).